Reading from the N-terminus, the 135-residue chain is MVQLTTIFCKAYHGGHLTIRLALGGCTNRPFYRIVAAHNKCPRDGRFVEQLGSYDPLPNSHGEKLVALNLDRIRHWIGCGAHLSKPMEKLLGLSGFFPLHPMMITNAERLRRRRAREVLLASQKAESEAKETEAS.

Residues Met1–Ile34 constitute a mitochondrion transit peptide.

The protein belongs to the bacterial ribosomal protein bS16 family. As to quaternary structure, component of the mitochondrial ribosome small subunit (28S) which comprises a 12S rRNA and about 30 distinct proteins.

It localises to the mitochondrion. This is Small ribosomal subunit protein bS16m (Mrps16) from Mus musculus (Mouse).